Here is a 278-residue protein sequence, read N- to C-terminus: Sulfur carrier protein FdhD (278 aa).

Cys-117 (cysteine persulfide intermediate) is an active-site residue.

Belongs to the FdhD family.

It localises to the cytoplasm. Its function is as follows. Required for formate dehydrogenase (FDH) activity. Acts as a sulfur carrier protein that transfers sulfur from IscS to the molybdenum cofactor prior to its insertion into FDH. In Variovorax paradoxus (strain S110), this protein is Sulfur carrier protein FdhD.